The chain runs to 360 residues: Phenylalanine--tRNA ligase alpha subunit (360 aa).

Mg(2+) is bound at residue glutamate 255.

This sequence belongs to the class-II aminoacyl-tRNA synthetase family. Phe-tRNA synthetase alpha subunit type 1 subfamily. As to quaternary structure, tetramer of two alpha and two beta subunits. It depends on Mg(2+) as a cofactor.

The protein resides in the cytoplasm. The catalysed reaction is tRNA(Phe) + L-phenylalanine + ATP = L-phenylalanyl-tRNA(Phe) + AMP + diphosphate + H(+). The sequence is that of Phenylalanine--tRNA ligase alpha subunit from Rhizorhabdus wittichii (strain DSM 6014 / CCUG 31198 / JCM 15750 / NBRC 105917 / EY 4224 / RW1) (Sphingomonas wittichii).